We begin with the raw amino-acid sequence, 509 residues long: Maturase K (509 aa).

The protein belongs to the intron maturase 2 family. MatK subfamily.

Its subcellular location is the plastid. The protein resides in the chloroplast. Functionally, usually encoded in the trnK tRNA gene intron. Probably assists in splicing its own and other chloroplast group II introns. The sequence is that of Maturase K from Nicotiana glutinosa (Tobacco).